A 165-amino-acid chain; its full sequence is Plastocyanin, chloroplastic (165 aa).

The N-terminal 66 residues, 1-66, are a transit peptide targeting the chloroplast; sequence MATVTSSAAV…AGILAGNAMA (66 aa). One can recognise a Plastocyanin-like domain in the interval 67–165; that stretch reads AEVLLGSSDG…AGMVGKVTVN (99 aa). Cu cation is bound by residues histidine 103, cysteine 150, histidine 153, and methionine 158.

This sequence belongs to the plastocyanin family. Cu(2+) is required as a cofactor.

Its subcellular location is the plastid. The protein localises to the chloroplast thylakoid membrane. In terms of biological role, participates in electron transfer between P700 and the cytochrome b6-f complex in photosystem I. The chain is Plastocyanin, chloroplastic (PETE) from Silene latifolia subsp. alba (White campion).